Reading from the N-terminus, the 120-residue chain is Large ribosomal subunit protein uL18 (120 aa).

This sequence belongs to the universal ribosomal protein uL18 family. Part of the 50S ribosomal subunit; part of the 5S rRNA/L5/L18/L25 subcomplex. Contacts the 5S and 23S rRNAs.

Functionally, this is one of the proteins that bind and probably mediate the attachment of the 5S RNA into the large ribosomal subunit, where it forms part of the central protuberance. The chain is Large ribosomal subunit protein uL18 from Paramagnetospirillum magneticum (strain ATCC 700264 / AMB-1) (Magnetospirillum magneticum).